The chain runs to 161 residues: Phosphotransferase enzyme IIB component GlvB (161 aa).

Residues 10-32 (LTQIAIGLCFTLLYFVVFRTLIL) traverse the membrane as a helical segment. Residues 70 to 152 (LDQAAGILQA…DSLINSHQSA (83 aa)) form the PTS EIIB type-1 domain. Cys92 (phosphocysteine intermediate) is an active-site residue.

The protein localises to the cell inner membrane. Functionally, the phosphoenolpyruvate-dependent sugar phosphotransferase system (sugar PTS), a major carbohydrate active -transport system, catalyzes the phosphorylation of incoming sugar substrates concomitantly with their translocation across the cell membrane. This operon may be cryptic in wild-type K12 strains. The polypeptide is Phosphotransferase enzyme IIB component GlvB (Escherichia coli (strain K12)).